We begin with the raw amino-acid sequence, 435 residues long: Casein kinase I homolog 2 (435 aa).

The Protein kinase domain maps to 12 to 282 (YRVGRKIGEG…FLQELFDDVL (271 aa)). ATP contacts are provided by residues 18-26 (IGEGSFGVI) and Lys-41. Asp-131 acts as the Proton acceptor in catalysis. Phosphoserine is present on Ser-361.

This sequence belongs to the protein kinase superfamily. CK1 Ser/Thr protein kinase family. Casein kinase I subfamily.

Its subcellular location is the cytoplasm. The catalysed reaction is L-seryl-[protein] + ATP = O-phospho-L-seryl-[protein] + ADP + H(+). It carries out the reaction L-threonyl-[protein] + ATP = O-phospho-L-threonyl-[protein] + ADP + H(+). Functionally, casein kinases are operationally defined by their preferential utilization of acidic proteins such as caseins as substrates. May contribute to the regulation of morphology. In Schizosaccharomyces pombe (strain 972 / ATCC 24843) (Fission yeast), this protein is Casein kinase I homolog 2 (cki2).